Here is a 377-residue protein sequence, read N- to C-terminus: MEARRARQKALKVKNLKNVRYMKLISVETSSSSDDSCDSFASDNFANTRLQFNREGCRTRSQCRPSGPLRVAMKFPARNTRRAANTKAAPPKPSESSANDSHSESDSEEEEDGMNFLEKRALNIKQNKAMLAKLMSELESFPGIFSGRHSLPGHRTKDSKSPRRRTFPGVASRRNPERRARPLTRSRSRILGSLGALPTEEEEDEEEEEDKYMLVRRRKSVDGYMNDDDVSRSRRPGSMTLPHIIRPVEDVTEEEIRNICSNSREKIYNRSLGSTCHQCRQKTTDTKTNCRNPDCWGIRGQFCGPCLRNRYGEEVKDALLDPNWHCPPCRGICNCSFCRQRDGRCATGVLVYLAKYHGFGNVHAYLKSLKQEFEMQA.

Disordered regions lie at residues 58–113 (RTRS…EEDG) and 144–211 (IFSG…EEDK). The span at 76-100 (PARNTRRAANTKAAPPKPSESSAND) shows a compositional bias: low complexity. Residues 148 to 173 (RHSLPGHRTKDSKSPRRRTFPGVASR) are interaction with MYC. The short motif at 163 to 179 (RRRTFPGVASRRNPERR) is the Nuclear localization signal element. The residue at position 166 (threonine 166) is a Phosphothreonine. Serine 193 is subject to Phosphoserine. Threonine 199 carries the phosphothreonine modification. Over residues 199–210 (TEEEEDEEEEED) the composition is skewed to acidic residues. Lysine 211 participates in a covalent cross-link: Glycyl lysine isopeptide (Lys-Gly) (interchain with G-Cter in SUMO2). Position 220 is a phosphoserine (serine 220). The tract at residues 253–377 (EEEIRNICSN…SLKQEFEMQA (125 aa)) is mediates transcriptional activity.

Interacts with MYC (via C-terminus), YWHAE and YWHAZ. Phosphorylation at Thr-166 promotes interaction with YWHAE and YWHAZ, dissociation from MYC and sequestration in the cytoplasm.

The protein resides in the nucleus. It localises to the cytoplasm. Participates in MYC-mediated cell transformation and apoptosis; induces anchorage-independent growth and clonogenicity in lymphoblastoid cells. Insufficient to induce tumorigenicity when overexpressed but contributes to MYC-mediated tumorigenesis. May play a role as transcriptional regulator. This Rattus norvegicus (Rat) protein is Cell division cycle-associated protein 7 (Cdca7).